A 393-amino-acid polypeptide reads, in one-letter code: MLITVYCVRRDLSEITFSLEVDGDFELENFRALCELESGIPASDTLIVYAERPLTDNQRSLASYGLKDGDVVILRQKEAPETRPAAPFPGLDFSTIAVPGASSQPDPSQPQAPPPPPDTSSFPQGLDNPALLRQMLLANPHELSLLKERNPPLAEALLSGDLEKFTKVLQEQQQERARREQERIRLYSADPFDLDAQAKIEEDIRQHNIEENMTIAMEEAPESFGQVVMLYINCKVNGYPVKAFVDSGAQMTIMSQACAERCHIMRLVDRRWAGIAKGVGTQKIIGRVHLAQVQIEGDFLPCSFSILEEQPMDMLLGLDMLKRHQCSIDLEKNVLVIGTTGTHTTFLPEGELPECARLAYGPGREEVPPEEIADRELAEVLQKSADEADQQKP.

One can recognise a Ubiquitin-like domain in the interval M1–E81. A disordered region spans residues T82–D127. A compositionally biased stretch (pro residues) spans P107–D118. Residue D246 is part of the active site. The Ubiquitin-binding motif lies at E370–D389.

It belongs to the DDI1 family. As to quaternary structure, homodimer.

The protein localises to the cytoplasm. The protein resides in the cytosol. It localises to the chromosome. Functionally, aspartic protease that mediates the cleavage of NFE2L1/NRF1 at 'Leu-104', thereby promoting release of NFE2L1/NRF1 from the endoplasmic reticulum membrane. Ubiquitination of NFE2L1/NRF1 is a prerequisite for cleavage, suggesting that DDI2 specifically recognizes and binds ubiquitinated NFE2L1/NRF1. Seems to act as a proteasomal shuttle which links the proteasome and replication fork proteins like RTF2. Required for cellular survival following replication stress. This chain is Protein DDI1 homolog 2 (ddi2), found in Xenopus laevis (African clawed frog).